A 368-amino-acid polypeptide reads, in one-letter code: Repressor ROX1 (368 aa).

A DNA-binding region (HMG box) is located at residues 10–83; it reads IPRPKNAFIL…EHERKYPEYK (74 aa). Disordered stretches follow at residues 100-121 and 242-273; these read IEQQQQQQQKEQQQQKQSQPQL and SSQTPVTTTTTSTTTATSSPGKFSSSPNSSVL. The segment covering 102-121 has biased composition (low complexity); sequence QQQQQQQKEQQQQKQSQPQL.

Its subcellular location is the nucleus. Its function is as follows. Transcription factor that represses the expression of HEM13, COX5B, ANB1, CYC7 or AAC3 (hypoxic function). Binds to the DNA sequence 5'-RRRTAACAAGAG-3'. This chain is Repressor ROX1 (ROX1), found in Saccharomyces cerevisiae (strain ATCC 204508 / S288c) (Baker's yeast).